The following is a 237-amino-acid chain: KH homology domain-containing protein 1 (237 aa).

The next 2 helical transmembrane spans lie at 7–29 (RLFRVLFVIETVSEYGVLIFIYG) and 33–50 (LQTLAMLLIGTVSFHLWI). Residues 96 to 155 (PMVFHMEEDQEELIFGHGDTYLRCIEVHSHTLIQLESWFTATGQTRVTVVGPHRARQWLL) enclose the KH; atypical domain.

It belongs to the KHDC1 family.

The protein resides in the membrane. In Homo sapiens (Human), this protein is KH homology domain-containing protein 1.